The sequence spans 316 residues: Transaldolase (316 aa).

Lysine 132 serves as the catalytic Schiff-base intermediate with substrate.

It belongs to the transaldolase family. Type 1 subfamily. Homodimer.

The protein localises to the cytoplasm. It catalyses the reaction D-sedoheptulose 7-phosphate + D-glyceraldehyde 3-phosphate = D-erythrose 4-phosphate + beta-D-fructose 6-phosphate. It participates in carbohydrate degradation; pentose phosphate pathway; D-glyceraldehyde 3-phosphate and beta-D-fructose 6-phosphate from D-ribose 5-phosphate and D-xylulose 5-phosphate (non-oxidative stage): step 2/3. Its function is as follows. Transaldolase is important for the balance of metabolites in the pentose-phosphate pathway. The chain is Transaldolase from Aliivibrio salmonicida (strain LFI1238) (Vibrio salmonicida (strain LFI1238)).